Consider the following 330-residue polypeptide: MATH domain and coiled-coil domain-containing protein At3g58210 (330 aa).

One can recognise an MATH domain in the interval 6–133 (DNKFTWVIQN…NDELKIVAEV (128 aa)). The stretch at 263–314 (FKVDWLEKKLEEVKKKKEEEQTGEARIQELEEELKEFKQKCLDREAMLEKEK) forms a coiled coil.

This chain is MATH domain and coiled-coil domain-containing protein At3g58210, found in Arabidopsis thaliana (Mouse-ear cress).